A 120-amino-acid chain; its full sequence is Ribosome-binding factor A (120 aa).

The protein belongs to the RbfA family. As to quaternary structure, monomer. Binds 30S ribosomal subunits, but not 50S ribosomal subunits or 70S ribosomes.

The protein resides in the cytoplasm. Its function is as follows. One of several proteins that assist in the late maturation steps of the functional core of the 30S ribosomal subunit. Associates with free 30S ribosomal subunits (but not with 30S subunits that are part of 70S ribosomes or polysomes). Required for efficient processing of 16S rRNA. May interact with the 5'-terminal helix region of 16S rRNA. The polypeptide is Ribosome-binding factor A (Clostridium botulinum (strain 657 / Type Ba4)).